A 60-amino-acid polypeptide reads, in one-letter code: Toxin FS-2 (60 aa).

4 disulfides stabilise this stretch: cysteine 3/cysteine 22, cysteine 17/cysteine 39, cysteine 41/cysteine 52, and cysteine 53/cysteine 58. The important for binding to L-type calcium channels stretch occupies residues 41-48 (CPTAMWPY).

It belongs to the three-finger toxin family. Short-chain subfamily. L-type calcium blocker sub-subfamily. As to expression, expressed by the venom gland.

It is found in the secreted. Its function is as follows. Specific blocker of the voltage-dependent L-type calcium channel (Cav1/CACNA1). Inhibits cardiac contractions. This is Toxin FS-2 from Dendroaspis polylepis polylepis (Black mamba).